We begin with the raw amino-acid sequence, 134 residues long: Interleukin-5 (134 aa).

An N-terminal signal peptide occupies residues 1–21; the sequence is MRMLLNLSLLALGAAYVSAFA. Residues N76 and N90 are each glycosylated (N-linked (GlcNAc...) asparagine).

It belongs to the IL-5 family. As to quaternary structure, homodimer; disulfide-linked. Interacts with IL5RA. Interacts with CSF2RB.

It localises to the secreted. In terms of biological role, homodimeric cytokine expressed predominantly by T-lymphocytes and NK cells that plays an important role in the survival, differentiation, and chemotaxis of eosinophils. Also acts on activated and resting B-cells to induce immunoglobulin production, growth, and differentiation. Mechanistically, exerts its biological effects through a receptor composed of IL5RA subunit and the cytokine receptor common subunit beta/CSF2RB. Binding to the receptor leads to activation of various kinases including LYN, SYK and JAK2 and thereby propagates signals through the RAS-MAPK and JAK-STAT5 pathways respectively. This chain is Interleukin-5 (IL5), found in Canis lupus familiaris (Dog).